We begin with the raw amino-acid sequence, 240 residues long: Penton protein H240R (240 aa).

This sequence belongs to the asfivirus H240R family.

The protein localises to the virion. Its function is as follows. Forms the penton at the fivefold vertices of the icosahedral capsid. Together with the minor capsid proteins (p17, p49, and M1249L), forms a complicated network immediately below the outer capsid shell, stabilizing the whole capsid. This chain is Penton protein H240R, found in African swine fever virus (strain Badajoz 1971 Vero-adapted) (Ba71V).